The primary structure comprises 162 residues: Protein cornichon homolog 2 (162 aa).

The Cytoplasmic segment spans residues methionine 1–tyrosine 10. A helical transmembrane segment spans residues methionine 11 to phenylalanine 31. The Lumenal segment spans residues aspartate 32–tyrosine 72. A helical transmembrane segment spans residues cysteine 73–leucine 93. Residues asparagine 94–lysine 138 lie on the Cytoplasmic side of the membrane. The helical transmembrane segment at leucine 139–serine 161 threads the bilayer. Position 162 (alanine 162) is a topological domain, lumenal.

It belongs to the cornichon family.

Its subcellular location is the membrane. Its function is as follows. Regulates the trafficking and gating properties of AMPA-selective glutamate receptors (AMPARs). The polypeptide is Protein cornichon homolog 2 (cnih2) (Xenopus laevis (African clawed frog)).